A 606-amino-acid chain; its full sequence is NADH-ubiquinone oxidoreductase chain 5 (606 aa).

Transmembrane regions (helical) follow at residues 4-24, 38-58, 87-107, 117-137, 140-160, 171-191, 211-233, 241-261, 273-293, 301-320, 325-347, 366-386, 413-433, 457-477, 488-508, and 584-604; these read FSSL…SSIL, NIIS…IHSG, MIFV…SLWY, FFKY…ANNL, LFIG…WWYG, AILY…WFLF, LPLL…HPWL, TPVS…FLLI, IQSL…ICAL, IIAF…IGIN, AFLH…GSII, MPFT…MPFL, LIAT…ALLG, LLIG…PTTI, LTAL…SLIT, and IKLY…LFNL.

Belongs to the complex I subunit 5 family. As to quaternary structure, core subunit of respiratory chain NADH dehydrogenase (Complex I) which is composed of 45 different subunits.

It is found in the mitochondrion inner membrane. The catalysed reaction is a ubiquinone + NADH + 5 H(+)(in) = a ubiquinol + NAD(+) + 4 H(+)(out). Functionally, core subunit of the mitochondrial membrane respiratory chain NADH dehydrogenase (Complex I) which catalyzes electron transfer from NADH through the respiratory chain, using ubiquinone as an electron acceptor. Essential for the catalytic activity and assembly of complex I. This Equus asinus (Donkey) protein is NADH-ubiquinone oxidoreductase chain 5 (MT-ND5).